Reading from the N-terminus, the 340-residue chain is Protein RecA (340 aa).

Gly65–Thr72 contacts ATP.

It belongs to the RecA family.

The protein localises to the cytoplasm. Can catalyze the hydrolysis of ATP in the presence of single-stranded DNA, the ATP-dependent uptake of single-stranded DNA by duplex DNA, and the ATP-dependent hybridization of homologous single-stranded DNAs. It interacts with LexA causing its activation and leading to its autocatalytic cleavage. This is Protein RecA from Thermus aquaticus.